Here is a 288-residue protein sequence, read N- to C-terminus: ATP synthase gamma chain (288 aa).

Belongs to the ATPase gamma chain family. F-type ATPases have 2 components, CF(1) - the catalytic core - and CF(0) - the membrane proton channel. CF(1) has five subunits: alpha(3), beta(3), gamma(1), delta(1), epsilon(1). CF(0) has three main subunits: a, b and c.

Its subcellular location is the cell inner membrane. Its function is as follows. Produces ATP from ADP in the presence of a proton gradient across the membrane. The gamma chain is believed to be important in regulating ATPase activity and the flow of protons through the CF(0) complex. The protein is ATP synthase gamma chain of Rickettsia felis (strain ATCC VR-1525 / URRWXCal2) (Rickettsia azadi).